The following is a 157-amino-acid chain: Deoxyuridine 5'-triphosphate nucleotidohydrolase (157 aa).

Residues 73–75, asparagine 86, and 90–92 each bind substrate; these read RSG and TID.

The protein belongs to the dUTPase family. Mg(2+) is required as a cofactor.

It carries out the reaction dUTP + H2O = dUMP + diphosphate + H(+). The protein operates within pyrimidine metabolism; dUMP biosynthesis; dUMP from dCTP (dUTP route): step 2/2. Its function is as follows. This enzyme is involved in nucleotide metabolism: it produces dUMP, the immediate precursor of thymidine nucleotides and it decreases the intracellular concentration of dUTP so that uracil cannot be incorporated into DNA. In Azorhizobium caulinodans (strain ATCC 43989 / DSM 5975 / JCM 20966 / LMG 6465 / NBRC 14845 / NCIMB 13405 / ORS 571), this protein is Deoxyuridine 5'-triphosphate nucleotidohydrolase.